The sequence spans 685 residues: Eukaryotic peptide chain release factor GTP-binding subunit (685 aa).

3 disordered regions span residues methionine 1–alanine 34, tyrosine 63–glycine 99, and glycine 112–serine 234. Residue serine 2 is modified to N-acetylserine. Positions serine 2–isoleucine 239 are interaction with PAB1. The interval asparagine 5 to glutamine 135 is prion domain (PrD). Residues phenylalanine 117–phenylalanine 129 are compositionally biased toward polar residues. The charged stretch occupies residues lysine 139–glutamate 249. Positions alanine 166–glutamate 222 are enriched in basic and acidic residues. Polar residues predominate over residues serine 223 to serine 234. The region spanning lysine 258–arginine 484 is the tr-type G domain. Residues glycine 267–serine 274 form a G1 region. Glycine 267–serine 274 provides a ligand contact to GTP. The tract at residues glycine 323–glutamate 327 is G2. The interval aspartate 344–glycine 347 is G3. GTP-binding positions include asparagine 406–aspartate 409 and glycine 449–tyrosine 450. Positions asparagine 406–aspartate 409 are G4. Residues serine 448–tyrosine 450 form a G5 region. The residue at position 571 (serine 571) is a Phosphoserine.

Belongs to the TRAFAC class translation factor GTPase superfamily. Classic translation factor GTPase family. ERF3 subfamily. As to quaternary structure, heterodimer of two subunits, one of which binds GTP. Interacts with polyadenylate-binding protein PAB1, and TPA1.

Its subcellular location is the cytoplasm. The enzyme catalyses GTP + H2O = GDP + phosphate + H(+). GTPase component of the eRF1-eRF3-GTP ternary complex, a ternary complex that mediates translation termination in response to the termination codons UAA, UAG and UGA. SUP35/eRF3 mediates SUP45/eRF1 delivery to stop codons: The eRF1-eRF3-GTP complex binds to a stop codon in the ribosomal A-site. GTP hydrolysis by SUP35/eRF3 induces a conformational change that leads to its dissociation, permitting SUP45/eRF1 to accommodate fully in the A-site. Recruited by polyadenylate-binding protein PAB1 to poly(A)-tails of mRNAs. Interaction with PAB1 is also required for regulation of normal mRNA decay through translation termination-coupled poly(A) shortening. The polypeptide is Eukaryotic peptide chain release factor GTP-binding subunit (SUP35) (Saccharomyces cerevisiae (strain ATCC 204508 / S288c) (Baker's yeast)).